Reading from the N-terminus, the 508-residue chain is Small ribosomal subunit protein uS3m (508 aa).

It belongs to the universal ribosomal protein uS3 family. In terms of assembly, component of the mitochondrial small ribosomal subunit (mt-SSU). Mature N.crassa 74S mitochondrial ribosomes consist of a small (37S) and a large (54S) subunit. The 37S small subunit contains a 16S ribosomal RNA (16S mt-rRNA) and 32 different proteins. The 54S large subunit contains a 23S rRNA (23S mt-rRNA) and 42 different proteins. uS3m, uS4m and uS5m form the narrow entry site of the mRNA channel.

The protein resides in the mitochondrion. Functionally, component of the mitochondrial ribosome (mitoribosome), a dedicated translation machinery responsible for the synthesis of mitochondrial genome-encoded proteins, including at least some of the essential transmembrane subunits of the mitochondrial respiratory chain. The mitoribosomes are attached to the mitochondrial inner membrane and translation products are cotranslationally integrated into the membrane. uS3m is essential for mitochondrial protein synthesis and required for the maturation of small ribosomal subunits. The chain is Small ribosomal subunit protein uS3m (var1) from Neurospora crassa (strain ATCC 24698 / 74-OR23-1A / CBS 708.71 / DSM 1257 / FGSC 987).